We begin with the raw amino-acid sequence, 581 residues long: Netrin-3 (581 aa).

The signal sequence occupies residues leucine 1–alanine 15. Residues alanine 35–arginine 261 enclose the Laminin N-terminal domain. N-linked (GlcNAc...) asparagine glycans are attached at residues asparagine 88 and asparagine 103. 15 cysteine pairs are disulfide-bonded: cysteine 91–cysteine 124, cysteine 262–cysteine 271, cysteine 264–cysteine 281, cysteine 283–cysteine 292, cysteine 295–cysteine 315, cysteine 318–cysteine 327, cysteine 320–cysteine 345, cysteine 348–cysteine 357, cysteine 360–cysteine 378, cysteine 381–cysteine 393, cysteine 383–cysteine 400, cysteine 402–cysteine 411, cysteine 414–cysteine 428, cysteine 449–cysteine 521, and cysteine 468–cysteine 578. Laminin EGF-like domains follow at residues cysteine 262 to alanine 317, cysteine 318 to alanine 380, and cysteine 381 to lysine 430. A glycan (N-linked (GlcNAc...) asparagine) is linked at asparagine 394. One can recognise an NTR domain in the interval cysteine 449–cysteine 578. The short motif at arginine 507–aspartate 509 is the Cell attachment site element. N-linked (GlcNAc...) asparagine glycosylation is present at asparagine 540.

The protein localises to the secreted. It is found in the extracellular space. It localises to the extracellular matrix. In terms of biological role, netrins control guidance of CNS commissural axons and peripheral motor axons. This Gallus gallus (Chicken) protein is Netrin-3 (NTN3).